Consider the following 655-residue polypeptide: p-hydroxybenzoic acid efflux pump subunit AaeB (655 aa).

11 consecutive transmembrane segments (helical) span residues 13–33, 38–58, 69–89, 93–113, 121–141, 152–172, 370–390, 407–427, 431–451, 459–479, and 482–502; these read FAVK…HFQL, WAVL…GGEP, LRII…IAMI, LLMI…SSLV, WGLA…EPLL, EIVI…PRSI, LFWL…IAVV, FIYG…VIIP, QSML…GIEV, MGAL…TFHF, and FLDS…VILL.

This sequence belongs to the aromatic acid exporter ArAE (TC 2.A.85) family.

The protein resides in the cell inner membrane. Its function is as follows. Forms an efflux pump with AaeA. Could function as a metabolic relief valve, allowing to eliminate certain compounds when they accumulate to high levels in the cell. The polypeptide is p-hydroxybenzoic acid efflux pump subunit AaeB (Escherichia coli (strain K12 / MC4100 / BW2952)).